We begin with the raw amino-acid sequence, 531 residues long: Keratin, type II cytoskeletal 79 (531 aa).

The span at methionine 1–threonine 12 shows a compositional bias: polar residues. The interval methionine 1–glycine 55 is disordered. The interval methionine 1–glutamine 138 is head. Low complexity predominate over residues arginine 28–arginine 40. Residues glycine 41 to glycine 55 are compositionally biased toward gly residues. Residues glutamate 139–leucine 174 are coil 1A. Positions glutamate 139–methionine 453 constitute an IF rod domain. The tract at residues glutamine 175 to tyrosine 194 is linker 1. Residues leucine 195–valine 286 are coil 1B. The segment at glutamine 287–isoleucine 310 is linker 12. The segment at isoleucine 311–glutamate 449 is coil 2. Residues glutamate 450–tyrosine 531 form a tail region.

The protein belongs to the intermediate filament family. Heterotetramer of two type I and two type II keratins.

This Mus musculus (Mouse) protein is Keratin, type II cytoskeletal 79 (Krt79).